A 215-amino-acid polypeptide reads, in one-letter code: UPF0502 protein YceH (215 aa).

N6-acetyllysine is present on Lys-80.

Belongs to the UPF0502 family.

This is UPF0502 protein YceH from Escherichia coli O127:H6 (strain E2348/69 / EPEC).